We begin with the raw amino-acid sequence, 134 residues long: Ribosome-binding factor A (134 aa).

It belongs to the RbfA family. In terms of assembly, monomer. Binds 30S ribosomal subunits, but not 50S ribosomal subunits or 70S ribosomes.

The protein localises to the cytoplasm. Its function is as follows. One of several proteins that assist in the late maturation steps of the functional core of the 30S ribosomal subunit. Associates with free 30S ribosomal subunits (but not with 30S subunits that are part of 70S ribosomes or polysomes). Required for efficient processing of 16S rRNA. May interact with the 5'-terminal helix region of 16S rRNA. This is Ribosome-binding factor A from Bdellovibrio bacteriovorus (strain ATCC 15356 / DSM 50701 / NCIMB 9529 / HD100).